The sequence spans 322 residues: N-acetyl-gamma-glutamyl-phosphate reductase (322 aa).

The active site involves cysteine 132.

The protein belongs to the NAGSA dehydrogenase family. Type 1 subfamily.

It localises to the cytoplasm. It catalyses the reaction N-acetyl-L-glutamate 5-semialdehyde + phosphate + NADP(+) = N-acetyl-L-glutamyl 5-phosphate + NADPH + H(+). It participates in amino-acid biosynthesis; L-arginine biosynthesis; N(2)-acetyl-L-ornithine from L-glutamate: step 3/4. Its function is as follows. Catalyzes the NADPH-dependent reduction of N-acetyl-5-glutamyl phosphate to yield N-acetyl-L-glutamate 5-semialdehyde. The polypeptide is N-acetyl-gamma-glutamyl-phosphate reductase (Bacteroides fragilis (strain YCH46)).